A 764-amino-acid chain; its full sequence is Ergosteryl-beta-glucosidase (764 aa).

Glutamate 515 (nucleophile) is an active-site residue. The tract at residues 588–629 is disordered; the sequence is HDTRAKTPTPEPSPASTVASVSTSTSKSGSSQPPSFIKPDNH. At threonine 594 the chain carries Phosphothreonine. The span at 601-622 shows a compositional bias: low complexity; that stretch reads PASTVASVSTSTSKSGSSQPPS.

This sequence belongs to the glycosyl hydrolase 5 (cellulase A) family.

The protein resides in the cytoplasm. The protein localises to the cytosol. It localises to the vacuole membrane. The enzyme catalyses ergosteryl 3-beta-D-glucoside + H2O = ergosterol + D-glucose. Functionally, ergosteryl beta-glucosidase involved in the ergosteryl beta-glucoside (EG) catabolic pathway and vacuole formation via hydrolysis of EG to generate glucose. Is also able to hydrolyze cholesteryl beta-glucoside and sitosteryl beta-glucoside to generate glucose; and C6-7-nitro-2,1,3-benzoxadiazole (NBD)-GlcCer to generate C6-NBD-ceramide (Cer). The sequence is that of Ergosteryl-beta-glucosidase from Saccharomyces cerevisiae (strain ATCC 204508 / S288c) (Baker's yeast).